The chain runs to 384 residues: Putative pectate lyase 2 (384 aa).

The signal sequence occupies residues 1–23; sequence MASLFLTIISLLFAAFSSSVVEA. 3 residues coordinate Ca(2+): aspartate 182, aspartate 206, and aspartate 210. The active site involves arginine 262.

Belongs to the polysaccharide lyase 1 family. It depends on Ca(2+) as a cofactor.

It carries out the reaction Eliminative cleavage of (1-&gt;4)-alpha-D-galacturonan to give oligosaccharides with 4-deoxy-alpha-D-galact-4-enuronosyl groups at their non-reducing ends.. It participates in glycan metabolism; pectin degradation; 2-dehydro-3-deoxy-D-gluconate from pectin: step 2/5. The protein is Putative pectate lyase 2 of Arabidopsis thaliana (Mouse-ear cress).